Consider the following 122-residue polypeptide: Large ribosomal subunit protein uL14 (122 aa).

It belongs to the universal ribosomal protein uL14 family. In terms of assembly, part of the 50S ribosomal subunit. Forms a cluster with proteins L3 and L19. In the 70S ribosome, L14 and L19 interact and together make contacts with the 16S rRNA in bridges B5 and B8.

Functionally, binds to 23S rRNA. Forms part of two intersubunit bridges in the 70S ribosome. In Geotalea daltonii (strain DSM 22248 / JCM 15807 / FRC-32) (Geobacter daltonii), this protein is Large ribosomal subunit protein uL14.